A 447-amino-acid chain; its full sequence is Probable glycine dehydrogenase (decarboxylating) subunit 1 (447 aa).

The protein belongs to the GcvP family. N-terminal subunit subfamily. The glycine cleavage system is composed of four proteins: P, T, L and H. In this organism, the P 'protein' is a heterodimer of two subunits.

It catalyses the reaction N(6)-[(R)-lipoyl]-L-lysyl-[glycine-cleavage complex H protein] + glycine + H(+) = N(6)-[(R)-S(8)-aminomethyldihydrolipoyl]-L-lysyl-[glycine-cleavage complex H protein] + CO2. The glycine cleavage system catalyzes the degradation of glycine. The P protein binds the alpha-amino group of glycine through its pyridoxal phosphate cofactor; CO(2) is released and the remaining methylamine moiety is then transferred to the lipoamide cofactor of the H protein. This Metallosphaera sedula (strain ATCC 51363 / DSM 5348 / JCM 9185 / NBRC 15509 / TH2) protein is Probable glycine dehydrogenase (decarboxylating) subunit 1.